The chain runs to 431 residues: Enolase (431 aa).

Position 167 (Gln-167) interacts with (2R)-2-phosphoglycerate. Glu-209 acts as the Proton donor in catalysis. Mg(2+)-binding residues include Asp-246, Glu-289, and Asp-316. Residues Lys-341, Arg-370, Ser-371, and Lys-392 each coordinate (2R)-2-phosphoglycerate. The Proton acceptor role is filled by Lys-341.

The protein belongs to the enolase family. As to quaternary structure, component of the RNA degradosome, a multiprotein complex involved in RNA processing and mRNA degradation. Requires Mg(2+) as cofactor.

It is found in the cytoplasm. The protein resides in the secreted. It localises to the cell surface. It carries out the reaction (2R)-2-phosphoglycerate = phosphoenolpyruvate + H2O. It participates in carbohydrate degradation; glycolysis; pyruvate from D-glyceraldehyde 3-phosphate: step 4/5. Functionally, catalyzes the reversible conversion of 2-phosphoglycerate (2-PG) into phosphoenolpyruvate (PEP). It is essential for the degradation of carbohydrates via glycolysis. The chain is Enolase from Hahella chejuensis (strain KCTC 2396).